Reading from the N-terminus, the 176-residue chain is Large ribosomal subunit protein uL10 (176 aa).

Belongs to the universal ribosomal protein uL10 family. As to quaternary structure, part of the ribosomal stalk of the 50S ribosomal subunit. The N-terminus interacts with L11 and the large rRNA to form the base of the stalk. The C-terminus forms an elongated spine to which L12 dimers bind in a sequential fashion forming a multimeric L10(L12)X complex.

Forms part of the ribosomal stalk, playing a central role in the interaction of the ribosome with GTP-bound translation factors. This is Large ribosomal subunit protein uL10 (rplJ) from Streptomyces coelicolor (strain ATCC BAA-471 / A3(2) / M145).